We begin with the raw amino-acid sequence, 557 residues long: Aerobic glycerol-3-phosphate dehydrogenase (557 aa).

21–49 (DLVIIGGGITGAGIALDASERGMKVALVE) lines the FAD pocket.

This sequence belongs to the FAD-dependent glycerol-3-phosphate dehydrogenase family. It depends on FAD as a cofactor.

It is found in the cytoplasm. It carries out the reaction a quinone + sn-glycerol 3-phosphate = dihydroxyacetone phosphate + a quinol. Its pathway is polyol metabolism; glycerol degradation via glycerol kinase pathway; glycerone phosphate from sn-glycerol 3-phosphate (aerobic route): step 1/1. This Staphylococcus aureus (strain MRSA252) protein is Aerobic glycerol-3-phosphate dehydrogenase (glpD).